The chain runs to 436 residues: GTPase Der (436 aa).

EngA-type G domains follow at residues 4-167 (PVIA…PKIE) and 176-351 (IRFS…ESHS). Residues 10-17 (GRPNVGKS), 57-61 (DTGGI), 119-122 (NKVD), 182-189 (GRPNVGKS), 229-233 (DTAGM), and 294-297 (NKWD) each bind GTP. The 85-residue stretch at 352–436 (IRVQTNVLND…PIHIIARARD (85 aa)) folds into the KH-like domain.

This sequence belongs to the TRAFAC class TrmE-Era-EngA-EngB-Septin-like GTPase superfamily. EngA (Der) GTPase family. As to quaternary structure, associates with the 50S ribosomal subunit.

In terms of biological role, GTPase that plays an essential role in the late steps of ribosome biogenesis. The sequence is that of GTPase Der from Bacillus mycoides (strain KBAB4) (Bacillus weihenstephanensis).